The following is a 238-amino-acid chain: MPQIYFNGPEGRIEGRYAKATSPNAPIALVLHPHPLYEGNMNNKVVYNAYKILVDNGYTVLRINFRGVGGSQGKFDNGVGEVVDAGAALDWLQQNNPNAQSNLILGFSFGAWIAMQLVMRRPEINHFLAISPPVNTIHKYDFSFLAPCPIPGFILQGDNDSIVSADDVKDLVNRLSNQQSHIKIDYKIINGADHFFRYKTEEFSKAINDYLITIQSNYHHHNNINEDKSKNQKKLFLY.

This is an uncharacterized protein from Rickettsia prowazekii (strain Madrid E).